Reading from the N-terminus, the 33-residue chain is Phosphoglycerate kinase (33 aa).

Lysine 13 contacts AMP. Residue lysine 13 participates in ATP binding.

The protein belongs to the phosphoglycerate kinase family. As to quaternary structure, monomer. The cofactor is Mg(2+).

It carries out the reaction (2R)-3-phosphoglycerate + ATP = (2R)-3-phospho-glyceroyl phosphate + ADP. This chain is Phosphoglycerate kinase, found in Pseudotsuga menziesii (Douglas-fir).